The sequence spans 432 residues: Tryptophan--tRNA ligase (432 aa).

Residues 13-15 (TTS) and 21-22 (GN) each bind ATP. The 'HIGH' region motif lies at 14 to 22 (TSGTPHLGN). D146 lines the L-tryptophan pocket. ATP is bound by residues 158–160 (GRD), L198, and 205–209 (KMSKS). The 'KMSKS' region signature appears at 205–209 (KMSKS).

It belongs to the class-I aminoacyl-tRNA synthetase family. In terms of assembly, homodimer.

It is found in the cytoplasm. It carries out the reaction tRNA(Trp) + L-tryptophan + ATP = L-tryptophyl-tRNA(Trp) + AMP + diphosphate + H(+). Functionally, catalyzes the attachment of tryptophan to tRNA(Trp). The sequence is that of Tryptophan--tRNA ligase from Xanthomonas axonopodis pv. citri (strain 306).